We begin with the raw amino-acid sequence, 469 residues long: Solute carrier family 52, riboflavin transporter, member 3 (469 aa).

At 1–6 (MALLTH) the chain is on the cytoplasmic side. A helical membrane pass occupies residues 7-27 (LLVCTFGMGSWVAINGLWVEL). Residues 28 to 43 (PLLVTELPEGWYLPSY) are Extracellular-facing. The chain crosses the membrane as a helical span at residues 44–64 (LTMVIQLANIGPLLVTLLHHF). Topologically, residues 65–71 (QPSCLSE) are cytoplasmic. Residues 72-92 (VPIIFTVLAVGTVACALFAFL) traverse the membrane as a helical segment. Residues 93–105 (WNVTSWVLDGRHS) are Extracellular-facing. N-linked (GlcNAc...) asparagine glycosylation occurs at Asn-94. A helical transmembrane segment spans residues 106-126 (IAFMVLTFFLALVDCTSSVTF). The Cytoplasmic segment spans residues 127–137 (LPFMSRLPACY). A helical transmembrane segment spans residues 138–158 (LTTFFVGEGLSSLLPALVALA). Topologically, residues 159–220 (QGSGLTTCVN…SRYLPANFSP (62 aa)) are extracellular. The N-linked (GlcNAc...) asparagine glycan is linked to Asn-168. The helical transmembrane segment at 221-241 (LVFFLLLSFMMACCLAAFFLL) threads the bilayer. The Cytoplasmic segment spans residues 242 to 297 (QRQPRPRESSIEDLLTSQVTLHSIRPREGDDLGPPDPGPSSKAQGLPEEKTASDHP). Ser-251 bears the Phosphoserine mark. Residues 266-290 (RPREGDDLGPPDPGPSSKAQGLPEE) form a disordered region. The chain crosses the membrane as a helical span at residues 298–318 (AHLAFIYVLVAFVNALTNGVL). The Extracellular segment spans residues 319–335 (PSVQTYSCLSYGPVAYH). Residues 336 to 356 (LSATLSSMANPLACFLSMFLP) form a helical membrane-spanning segment. At 357-361 (HRSLP) the chain is on the cytoplasmic side. Residues 362–382 (FLGVLTVLGTGFGAYNMAMAV) form a helical membrane-spanning segment. The Extracellular portion of the chain corresponds to 383-396 (MSPCPLMQGHWAGE). A helical transmembrane segment spans residues 397-417 (ILIVASWVLFIGCLSYVKVML). At 418–427 (GVILRDRSRS) the chain is on the cytoplasmic side. A helical transmembrane segment spans residues 428 to 448 (ALVWCGAAVQLGSLLGALLMF). Residues 449-469 (PLVNVLRLFSSADFCSLQCSA) lie on the Extracellular side of the membrane.

The protein belongs to the riboflavin transporter family.

Its subcellular location is the cell membrane. The catalysed reaction is riboflavin(in) = riboflavin(out). Functionally, plasma membrane transporter mediating the uptake by cells of the water soluble vitamin B2/riboflavin that plays a key role in biochemical oxidation-reduction reactions of the carbohydrate, lipid, and amino acid metabolism. The polypeptide is Solute carrier family 52, riboflavin transporter, member 3 (SLC52A3) (Ailuropoda melanoleuca (Giant panda)).